The following is a 263-amino-acid chain: MLTRRIIPCLDVKAGRVVKGISFLNHRDAGDPVQLAAFYNESGADELVFYDITASSDERNIMVEVVENVARQVFIPLTVGGGIRTVDDMYRMLRAGADKVSINTAAVLNPQLIEDGAKRFGSQCIVLSMDARRINEPGQPSQWNVFTHTGRDPRPTGLDAIEWAKRVVDLGAGELVINSMDADGTGAGYDNELLSAISQQVGVPVIASGGAGKPEHLLAALHEGKADAVLAASIFHFGTYTVEAVKEYLANQGIPMRRTPRPV.

Active-site residues include Asp11 and Asp130.

Belongs to the HisA/HisF family. As to quaternary structure, heterodimer of HisH and HisF.

It is found in the cytoplasm. The enzyme catalyses 5-[(5-phospho-1-deoxy-D-ribulos-1-ylimino)methylamino]-1-(5-phospho-beta-D-ribosyl)imidazole-4-carboxamide + L-glutamine = D-erythro-1-(imidazol-4-yl)glycerol 3-phosphate + 5-amino-1-(5-phospho-beta-D-ribosyl)imidazole-4-carboxamide + L-glutamate + H(+). It functions in the pathway amino-acid biosynthesis; L-histidine biosynthesis; L-histidine from 5-phospho-alpha-D-ribose 1-diphosphate: step 5/9. Functionally, IGPS catalyzes the conversion of PRFAR and glutamine to IGP, AICAR and glutamate. The HisF subunit catalyzes the cyclization activity that produces IGP and AICAR from PRFAR using the ammonia provided by the HisH subunit. The protein is Imidazole glycerol phosphate synthase subunit HisF of Herpetosiphon aurantiacus (strain ATCC 23779 / DSM 785 / 114-95).